Consider the following 381-residue polypeptide: Acetyl-CoA:oxalate CoA-transferase (381 aa).

His-233 is an active-site residue.

The protein belongs to the CoA-transferase III family. Homodimer.

It catalyses the reaction oxalate + acetyl-CoA = oxalyl-CoA + acetate. In terms of biological role, involved in the catabolism of oxalate and in the adapatation to low pH. ACOCT serves to prime the oxalate-induced acid tolerance response (ATR) cycle by producing substrate for oxalyl-CoA decarboxylase (OXC) and formyl-coenzyme A transferase (FCOCT). Catalyzes the reversible conversion of acetyl-CoA and oxalate to oxalyl-CoA and acetate. It can also use formyl-CoA and oxalate to produce oxalyl-CoA and formate with significantly reduced specific activity. This chain is Acetyl-CoA:oxalate CoA-transferase (yfdE), found in Escherichia coli (strain K12).